Consider the following 313-residue polypeptide: Pyrimidine-specific ribonucleoside hydrolase RihB (313 aa).

Asp11 (proton acceptor) is an active-site residue. Ca(2+)-binding residues include Asp11, Asp16, and Val124. Residues Gln227 and His239 each contribute to the substrate site. Residue Asp240 participates in Ca(2+) binding.

It belongs to the IUNH family. RihB subfamily. As to quaternary structure, homotetramer. Requires Ca(2+) as cofactor.

It catalyses the reaction a pyrimidine ribonucleoside + H2O = a pyrimidine nucleobase + D-ribose. Its function is as follows. Hydrolyzes cytidine or uridine to ribose and cytosine or uracil, respectively. Has a clear preference for cytidine over uridine. Strictly specific for ribonucleosides. This chain is Pyrimidine-specific ribonucleoside hydrolase RihB, found in Escherichia coli (strain SE11).